The following is a 666-amino-acid chain: tRNA 5-methylaminomethyl-2-thiouridine biosynthesis bifunctional protein MnmC (666 aa).

Residues 1–245 (MKQYAIQPAT…KREMLCGVME (245 aa)) form a tRNA (mnm(5)s(2)U34)-methyltransferase region. Residues 270-666 (IGGGIASALL…RKLLKGKAVK (397 aa)) form an FAD-dependent cmnm(5)s(2)U34 oxidoreductase region.

This sequence in the N-terminal section; belongs to the methyltransferase superfamily. tRNA (mnm(5)s(2)U34)-methyltransferase family. It in the C-terminal section; belongs to the DAO family. The cofactor is FAD.

It localises to the cytoplasm. It catalyses the reaction 5-aminomethyl-2-thiouridine(34) in tRNA + S-adenosyl-L-methionine = 5-methylaminomethyl-2-thiouridine(34) in tRNA + S-adenosyl-L-homocysteine + H(+). Catalyzes the last two steps in the biosynthesis of 5-methylaminomethyl-2-thiouridine (mnm(5)s(2)U) at the wobble position (U34) in tRNA. Catalyzes the FAD-dependent demodification of cmnm(5)s(2)U34 to nm(5)s(2)U34, followed by the transfer of a methyl group from S-adenosyl-L-methionine to nm(5)s(2)U34, to form mnm(5)s(2)U34. In Salmonella choleraesuis (strain SC-B67), this protein is tRNA 5-methylaminomethyl-2-thiouridine biosynthesis bifunctional protein MnmC.